A 284-amino-acid chain; its full sequence is Digeranylgeranylglyceryl phosphate synthase (284 aa).

Helical transmembrane passes span 10–30 (IHNVIGAGLGAFTGYVASSMW), 37–57 (LILAVLVVALVDAGGNAINDV), 76–98 (AVSLRTATSLSYGLMGVGVILSA), 102–119 (YLQFLVALLTSVALIFYA), 126–146 (GIYGNLVVATATALSLFYGGL), 217–237 (LPLFLGYNILYGIVLVPFLYI), and 260–280 (GSAFLGMVAFALGSLPFQFLF).

It belongs to the UbiA prenyltransferase family. DGGGP synthase subfamily. Mg(2+) serves as cofactor.

Its subcellular location is the cell membrane. It catalyses the reaction sn-3-O-(geranylgeranyl)glycerol 1-phosphate + (2E,6E,10E)-geranylgeranyl diphosphate = 2,3-bis-O-(geranylgeranyl)-sn-glycerol 1-phosphate + diphosphate. The protein operates within membrane lipid metabolism; glycerophospholipid metabolism. In terms of biological role, prenyltransferase that catalyzes the transfer of the geranylgeranyl moiety of geranylgeranyl diphosphate (GGPP) to the C2 hydroxyl of (S)-3-O-geranylgeranylglyceryl phosphate (GGGP). This reaction is the second ether-bond-formation step in the biosynthesis of archaeal membrane lipids. The chain is Digeranylgeranylglyceryl phosphate synthase from Metallosphaera sedula (strain ATCC 51363 / DSM 5348 / JCM 9185 / NBRC 15509 / TH2).